The chain runs to 390 residues: Stearoyl-[acyl-carrier-protein] 9-desaturase 5, chloroplastic (390 aa).

Residues 1 to 22 (MAFAASHTASPSSCGGVAQRRS) form a disordered region. The N-terminal 31 residues, 1–31 (MAFAASHTASPSSCGGVAQRRSNGMSPVVAM), are a transit peptide targeting the chloroplast. 6 residues coordinate Fe cation: E132, E170, H173, E223, E256, and H259.

It belongs to the fatty acid desaturase type 2 family. In terms of assembly, homodimer. The cofactor is Fe(2+).

The protein resides in the plastid. It is found in the chloroplast. The catalysed reaction is octadecanoyl-[ACP] + 2 reduced [2Fe-2S]-[ferredoxin] + O2 + 2 H(+) = (9Z)-octadecenoyl-[ACP] + 2 oxidized [2Fe-2S]-[ferredoxin] + 2 H2O. The protein operates within lipid metabolism; fatty acid metabolism. In terms of biological role, converts stearoyl-ACP to oleoyl-ACP by introduction of a cis double bond between carbons 9 and 10 of the acyl chain. The polypeptide is Stearoyl-[acyl-carrier-protein] 9-desaturase 5, chloroplastic (Oryza sativa subsp. japonica (Rice)).